Consider the following 135-residue polypeptide: Transcriptional activator protein (135 aa).

The Nuclear localization signal signature appears at 17–32; that stretch reads KIQHHIAKKRQVRRRR. A zinc finger spans residues 37–54; it reads CGCSYYIHLDCINHGFTH. Residues 120-135 are transactivation; the sequence is HLDDLTVSDWSFFKSL.

It belongs to the geminiviridae transcriptional activator protein family. As to quaternary structure, monomer. Homodimer. Homooligomer. Self-interaction correlates with nuclear localization and efficient activation of transcription. Monomers suppress local silencing by interacting with and inactivating host adenosine kinase 2 (ADK2) in the cytoplasm. Interacts with and inhibits host SNF1 kinase. Binds to ssDNA. May interact with host RPS27A. Post-translationally, phosphorylated.

The protein resides in the host nucleus. The protein localises to the host cytoplasm. Functionally, multifunctional protein that modulates host antiviral defenses and promotes host attractiveness to insect vectors. Acts as a suppressor of RNA-mediated gene silencing, also known as post-transcriptional gene silencing (PTGS), a mechanism of plant viral defense that limits the accumulation of viral RNAs. TrAP suppresses the host RNA silencing by inhibiting adenosine kinase 2 (ADK2), a kinase involved in a general methylation pathway. Also suppresses the host basal defense by interacting with and inhibiting SNF1 kinase, a key regulator of cell metabolism implicated in innate antiviral defense. In terms of biological role, inhibits signal transduction by the phytohormone jasmonate, making the infected plant more attractive to aphids, which are the second host to play a role as a dissemination vector. Acts by binding to ubiquitin precursor RPS27A, thereby preventing ubiquitin degradation of JAZ. This chain is Transcriptional activator protein, found in Capsicum annuum (Capsicum pepper).